The primary structure comprises 353 residues: Guanine nucleotide-binding protein subunit beta-5 (353 aa).

7 WD repeats span residues 61-100 (GHGNKVLCMDWCKDKRRIVSSSQDGKVIVWDSFTTNKEHA), 103-142 (MPCTWVMACAYAPSGCAIACGGLDNKCSVYPLTFDKNENM), 151-192 (MHTN…QSFH), 194-236 (HGAD…QAFE), 237-276 (THESDINSVRYYPSGDAFASGSDDATCRLYDLRADREVAI), 278-320 (SKES…RVSI), and 323-352 (GHENRVSTLRVSPDGTAFCSGSWDHTLRVW).

This sequence belongs to the WD repeat G protein beta family. As to quaternary structure, component of a complex composed of RGS9 (isoform RGS9-1), GNB5 and RGS9BP; within this complex, the presence of GNB5 stabilizes both itself and RGS9 and increases RGS9 GTPase-activating protein (GAP) activity. Interacts with RGS7, forming the RGS7-GNB5 complex; within this complex, the presence of GNB5 increases RGS7 GTPase-activating protein (GAP) activity. Interacts with GPR158; promotes the GTPase activator activity of the RGS7-GNB5 complex in absence of glycine, in contrast GTPase activator activity of the RGS7-GNB5 complex is inhibited in presence of glycine. Interacts with RGS6.

It localises to the membrane. Its function is as follows. Enhances GTPase-activating protein (GAP) activity of regulator of G protein signaling (RGS) proteins, such as RGS7 and RGS9, hence involved in the termination of the signaling initiated by the G protein coupled receptors (GPCRs) by accelerating the GTP hydrolysis on the G-alpha subunits, thereby promoting their inactivation. Increases RGS7 GTPase-activating protein (GAP) activity, thereby regulating mood and cognition. Increases RGS9 GTPase-activating protein (GAP) activity, hence contributes to the deactivation of G protein signaling initiated by D(2) dopamine receptors. May play an important role in neuronal signaling, including in the parasympathetic, but not sympathetic, control of heart rate. The polypeptide is Guanine nucleotide-binding protein subunit beta-5 (GNB5) (Oryctolagus cuniculus (Rabbit)).